We begin with the raw amino-acid sequence, 754 residues long: Putative sulfate transporter YPR003C (754 aa).

Residues Met-1–Ser-91 are disordered. Over Met-1 to Lys-118 the chain is Cytoplasmic. Positions Arg-25 to Asn-45 are enriched in basic and acidic residues. The segment covering Asn-65–Asn-89 has biased composition (low complexity). Residues Leu-119 to Ser-139 form a helical membrane-spanning segment. Residues Tyr-140–His-146 lie on the Lumenal side of the membrane. The helical transmembrane segment at Val-147 to Gly-167 threads the bilayer. Residues Ser-168 to Met-172 lie on the Cytoplasmic side of the membrane. Residues Ile-173–Leu-193 form a helical membrane-spanning segment. The Lumenal segment spans residues His-194 to Ser-199. A helical transmembrane segment spans residues Leu-200–Ile-220. Topologically, residues Ser-221–Lys-232 are cytoplasmic. The helical transmembrane segment at Ala-233–Ser-253 threads the bilayer. Over Glu-254–Ala-282 the chain is Lumenal. A helical membrane pass occupies residues Pro-283 to Leu-303. Topologically, residues Thr-304–Ser-317 are cytoplasmic. A helical membrane pass occupies residues Ala-318 to Phe-338. Topologically, residues Asn-339–Lys-370 are lumenal. Residues Leu-371–Thr-391 traverse the membrane as a helical segment. At Thr-392 to Glu-410 the chain is on the cytoplasmic side. Residues Leu-411 to Gly-431 traverse the membrane as a helical segment. Over Gly-432–Gly-450 the chain is Lumenal. The helical transmembrane segment at Val-451–Ile-471 threads the bilayer. At Pro-472–Cys-474 the chain is on the cytoplasmic side. The helical transmembrane segment at Val-475–Ile-495 threads the bilayer. At Lys-496 to Thr-517 the chain is on the lumenal side. Residues Ile-518–Ile-538 form a helical membrane-spanning segment. Residues Lys-539–Val-754 lie on the Cytoplasmic side of the membrane. An STAS domain is found at Asp-574 to Ile-725.

The protein belongs to the SLC26A/SulP transporter (TC 2.A.53) family.

The protein resides in the endoplasmic reticulum membrane. Possible sulfate transporter. The chain is Putative sulfate transporter YPR003C from Saccharomyces cerevisiae (strain ATCC 204508 / S288c) (Baker's yeast).